A 227-amino-acid polypeptide reads, in one-letter code: Cytochrome c oxidase subunit 2 (227 aa).

The Mitochondrial intermembrane segment spans residues methionine 1–serine 14. Residues proline 15 to methionine 45 form a helical membrane-spanning segment. Topologically, residues leucine 46–glutamine 59 are mitochondrial matrix. The helical transmembrane segment at glutamate 60–methionine 87 threads the bilayer. The Mitochondrial intermembrane segment spans residues aspartate 88–isoleucine 227. Residues histidine 161, cysteine 196, glutamate 198, cysteine 200, histidine 204, and methionine 207 each coordinate Cu cation. Residue glutamate 198 coordinates Mg(2+). Position 218 is a phosphotyrosine (tyrosine 218).

The protein belongs to the cytochrome c oxidase subunit 2 family. As to quaternary structure, component of the cytochrome c oxidase (complex IV, CIV), a multisubunit enzyme composed of 14 subunits. The complex is composed of a catalytic core of 3 subunits MT-CO1, MT-CO2 and MT-CO3, encoded in the mitochondrial DNA, and 11 supernumerary subunits COX4I, COX5A, COX5B, COX6A, COX6B, COX6C, COX7A, COX7B, COX7C, COX8 and NDUFA4, which are encoded in the nuclear genome. The complex exists as a monomer or a dimer and forms supercomplexes (SCs) in the inner mitochondrial membrane with NADH-ubiquinone oxidoreductase (complex I, CI) and ubiquinol-cytochrome c oxidoreductase (cytochrome b-c1 complex, complex III, CIII), resulting in different assemblies (supercomplex SCI(1)III(2)IV(1) and megacomplex MCI(2)III(2)IV(2)). Found in a complex with TMEM177, COA6, COX18, COX20, SCO1 and SCO2. Interacts with TMEM177 in a COX20-dependent manner. Interacts with COX20. Interacts with COX16. Cu cation serves as cofactor.

Its subcellular location is the mitochondrion inner membrane. It catalyses the reaction 4 Fe(II)-[cytochrome c] + O2 + 8 H(+)(in) = 4 Fe(III)-[cytochrome c] + 2 H2O + 4 H(+)(out). Component of the cytochrome c oxidase, the last enzyme in the mitochondrial electron transport chain which drives oxidative phosphorylation. The respiratory chain contains 3 multisubunit complexes succinate dehydrogenase (complex II, CII), ubiquinol-cytochrome c oxidoreductase (cytochrome b-c1 complex, complex III, CIII) and cytochrome c oxidase (complex IV, CIV), that cooperate to transfer electrons derived from NADH and succinate to molecular oxygen, creating an electrochemical gradient over the inner membrane that drives transmembrane transport and the ATP synthase. Cytochrome c oxidase is the component of the respiratory chain that catalyzes the reduction of oxygen to water. Electrons originating from reduced cytochrome c in the intermembrane space (IMS) are transferred via the dinuclear copper A center (CU(A)) of subunit 2 and heme A of subunit 1 to the active site in subunit 1, a binuclear center (BNC) formed by heme A3 and copper B (CU(B)). The BNC reduces molecular oxygen to 2 water molecules using 4 electrons from cytochrome c in the IMS and 4 protons from the mitochondrial matrix. The polypeptide is Cytochrome c oxidase subunit 2 (MT-CO2) (Arvicanthis somalicus (Neumann's grass rat)).